Here is a 418-residue protein sequence, read N- to C-terminus: Glutamyl-tRNA reductase (418 aa).

Residues 57–60 (TCNR), S113, 118–120 (DFE), and Q124 each bind substrate. C58 (nucleophile) is an active-site residue. Residue 193–198 (GTGKIG) participates in NADP(+) binding.

It belongs to the glutamyl-tRNA reductase family. As to quaternary structure, homodimer.

The enzyme catalyses (S)-4-amino-5-oxopentanoate + tRNA(Glu) + NADP(+) = L-glutamyl-tRNA(Glu) + NADPH + H(+). It functions in the pathway porphyrin-containing compound metabolism; protoporphyrin-IX biosynthesis; 5-aminolevulinate from L-glutamyl-tRNA(Glu): step 1/2. In terms of biological role, catalyzes the NADPH-dependent reduction of glutamyl-tRNA(Glu) to glutamate 1-semialdehyde (GSA). This is Glutamyl-tRNA reductase from Christiangramia forsetii (strain DSM 17595 / CGMCC 1.15422 / KT0803) (Gramella forsetii).